A 636-amino-acid polypeptide reads, in one-letter code: Chaperone protein HtpG (636 aa).

The a; substrate-binding stretch occupies residues 1 to 329 (MSKEHGAAAE…TEDLPLNISR (329 aa)). Residues 330–550 (ETLQENALIA…DGGMTASMEK (221 aa)) form a b region. Residues 551–636 (LMRVMNKDES…TGWYAEVRKL (86 aa)) are c.

The protein belongs to the heat shock protein 90 family. In terms of assembly, homodimer.

The protein resides in the cytoplasm. Molecular chaperone. Has ATPase activity. The chain is Chaperone protein HtpG from Oleidesulfovibrio alaskensis (strain ATCC BAA-1058 / DSM 17464 / G20) (Desulfovibrio alaskensis).